Consider the following 137-residue polypeptide: Histone H2B (137 aa).

A compositionally biased stretch (basic and acidic residues) spans 1 to 10; the sequence is MPPKAADKKP. The disordered stretch occupies residues 1-45; it reads MPPKAADKKPANKAPATASKAPEKKDAGKKTAASGEKKKRTKARK. Lys8 and Lys9 each carry N6-acetyllysine; alternate. Residues Lys8 and Lys9 each participate in a glycyl lysine isopeptide (Lys-Gly) (interchain with G-Cter in SUMO); alternate cross-link. Lys13 carries the N6-acetyllysine modification. Position 24 is an N6-acetyllysine; alternate (Lys24). Lys24 is covalently cross-linked (Glycyl lysine isopeptide (Lys-Gly) (interchain with G-Cter in SUMO); alternate). A Glycyl lysine isopeptide (Lys-Gly) (interchain with G-Cter in SUMO) cross-link involves residue Lys25. Lys131 participates in a covalent cross-link: Glycyl lysine isopeptide (Lys-Gly) (interchain with G-Cter in ubiquitin).

The protein belongs to the histone H2B family. The nucleosome is a histone octamer containing two molecules each of H2A, H2B, H3 and H4 assembled in one H3-H4 heterotetramer and two H2A-H2B heterodimers. The octamer wraps approximately 147 bp of DNA. In terms of processing, monoubiquitinated to form H2BK123ub1. H2BK123ub1 gives a specific tag for epigenetic transcriptional activation and is also prerequisite for H3K4me and H3K79me formation. H2BK123ub1 also modulates the formation of double-strand breaks during meiosis and is a prerequisite for DNA-damage checkpoint activation. Acetylated by GCN5 to form H2BK11ac and H2BK16ac. H2BK16ac can also be formed by ESA1. Acetylation of N-terminal lysines and particularly formation of H2BK11acK16ac has a positive effect on transcription. Post-translationally, sumoylation to form H2BK6su or H2BK7su, and probably also H2BK16su or H2BK17su, occurs preferentially near the telomeres and represses gene transcription.

It is found in the nucleus. The protein resides in the chromosome. Its function is as follows. Core component of nucleosome. Nucleosomes wrap and compact DNA into chromatin, limiting DNA accessibility to the cellular machineries which require DNA as a template. Histones thereby play a central role in transcription regulation, DNA repair, DNA replication and chromosomal stability. DNA accessibility is regulated via a complex set of post-translational modifications of histones, also called histone code, and nucleosome remodeling. The chain is Histone H2B (HTB1) from Podospora anserina (Pleurage anserina).